A 226-amino-acid chain; its full sequence is PKHD-type hydroxylase mma_3618 (226 aa).

Positions 78–178 (RYMPPLFNRY…RISSFFWVQS (101 aa)) constitute a Fe2OG dioxygenase domain. Fe cation contacts are provided by histidine 96, aspartate 98, and histidine 159. Arginine 169 lines the 2-oxoglutarate pocket.

The cofactor is Fe(2+). It depends on L-ascorbate as a cofactor.

This is PKHD-type hydroxylase mma_3618 from Janthinobacterium sp. (strain Marseille) (Minibacterium massiliensis).